Here is a 219-residue protein sequence, read N- to C-terminus: UPF0619 GPI-anchored membrane protein AFUA_3G00880 (219 aa).

An N-terminal signal peptide occupies residues 1–16 (MRFALTLTAFVGSVAA). N85 carries N-linked (GlcNAc...) asparagine glycosylation. Disordered stretches follow at residues 107-144 (SQQFKVESSGSSTTSDSTSSASATGSASTSSSSTGTVS) and 160-205 (SSTL…SLTV). Residues 114-144 (SSGSSTTSDSTSSASATGSASTSSSSTGTVS) show a composition bias toward low complexity. N198 is lipidated: GPI-like-anchor amidated asparagine. A propeptide spans 199-219 (GAGSLTVPAGSLLLGLVALAL) (removed in mature form).

This sequence belongs to the UPF0619 family. Post-translationally, the GPI-like anchor contains a phosphoceramide lipid group. The anchor position has not been determined.

Its subcellular location is the cell membrane. This Aspergillus fumigatus (strain ATCC MYA-4609 / CBS 101355 / FGSC A1100 / Af293) (Neosartorya fumigata) protein is UPF0619 GPI-anchored membrane protein AFUA_3G00880.